A 1218-amino-acid chain; its full sequence is Chitin synthase 4 (1218 aa).

2 disordered regions span residues 1–93 (MAEP…PERN) and 132–190 (TVSS…RRQK). Residues 14–34 (TRDKSHSPYRESPSRRLRDVE) show a composition bias toward basic and acidic residues. An N-linked (GlcNAc...) asparagine glycan is attached at asparagine 50. Polar residues-rich tracts occupy residues 71–80 (SNPNPMSQSD) and 133–142 (VSSGSTQQDT). The segment covering 175-190 (RKDTRNLTEEEKRRQK) has biased composition (basic and acidic residues). A glycan (N-linked (GlcNAc...) asparagine) is linked at asparagine 180. 2 helical membrane passes run 200-220 (IWNI…LQCF) and 235-255 (VGLI…TFGF). Asparagine 365, asparagine 404, and asparagine 426 each carry an N-linked (GlcNAc...) asparagine glycan. A helical transmembrane segment spans residues 487 to 507 (VVLYVSLVFILAIVAAKFFLA). Disordered stretches follow at residues 548-570 (PKIT…RGSM) and 582-606 (YAVD…AKLL). The span at 553–562 (PASTVTGSDG) shows a compositional bias: polar residues. N-linked (GlcNAc...) asparagine glycans are attached at residues asparagine 617, asparagine 903, and asparagine 1030. 3 helical membrane-spanning segments follow: residues 1062–1082 (IGTL…IISI), 1087–1107 (VPVI…ILIV), and 1115–1135 (YILW…VLPA). A disordered region spans residues 1188–1218 (QANGSVWNQQPPTRPPSGYGSMHGFEPYRDY). The segment covering 1189 to 1198 (ANGSVWNQQP) has biased composition (polar residues). N-linked (GlcNAc...) asparagine glycosylation is present at asparagine 1190.

This sequence belongs to the chitin synthase family. Class IV subfamily. In terms of processing, maximal activity requires trypsin activation, suggesting a zymogenic nature.

Its subcellular location is the cell membrane. The enzyme catalyses [(1-&gt;4)-N-acetyl-beta-D-glucosaminyl](n) + UDP-N-acetyl-alpha-D-glucosamine = [(1-&gt;4)-N-acetyl-beta-D-glucosaminyl](n+1) + UDP + H(+). Its activity is regulated as follows. Activity is stimulated by Mg(2+), and is more inhibited by polyoxin D than by nikkomycin. Polymerizes chitin, a structural polymer of the cell wall and septum, by transferring the sugar moiety of UDP-GlcNAc to the non-reducing end of the growing chitin polymer. CHS4 synthesizes a large amount of chitin and appears to play a role in the process of cell separation. CHS4 is particularly well suited for functioning at the higher temperatures associated with its poorly characterized saprophic environment and with human infection. This is Chitin synthase 4 from Exophiala dermatitidis (strain ATCC 34100 / CBS 525.76 / NIH/UT8656) (Black yeast).